A 424-amino-acid chain; its full sequence is Serine--tRNA ligase (424 aa).

231 to 233 (TAE) contributes to the L-serine binding site. Residue 261-263 (RSE) coordinates ATP. An L-serine-binding site is contributed by Glu-284. 348–351 (ETSS) provides a ligand contact to ATP. Residue Ser-383 coordinates L-serine.

The protein belongs to the class-II aminoacyl-tRNA synthetase family. Type-1 seryl-tRNA synthetase subfamily. As to quaternary structure, homodimer. The tRNA molecule binds across the dimer.

It is found in the cytoplasm. It catalyses the reaction tRNA(Ser) + L-serine + ATP = L-seryl-tRNA(Ser) + AMP + diphosphate + H(+). The catalysed reaction is tRNA(Sec) + L-serine + ATP = L-seryl-tRNA(Sec) + AMP + diphosphate + H(+). The protein operates within aminoacyl-tRNA biosynthesis; selenocysteinyl-tRNA(Sec) biosynthesis; L-seryl-tRNA(Sec) from L-serine and tRNA(Sec): step 1/1. Its function is as follows. Catalyzes the attachment of serine to tRNA(Ser). Is also able to aminoacylate tRNA(Sec) with serine, to form the misacylated tRNA L-seryl-tRNA(Sec), which will be further converted into selenocysteinyl-tRNA(Sec). This is Serine--tRNA ligase from Metamycoplasma arthritidis (strain 158L3-1) (Mycoplasma arthritidis).